A 315-amino-acid chain; its full sequence is Ribosomal RNA small subunit methyltransferase H (315 aa).

Residues 37-39, Asp-57, Phe-83, Asp-105, and Gln-112 each bind S-adenosyl-L-methionine; that span reads GGH.

The protein belongs to the methyltransferase superfamily. RsmH family.

It is found in the cytoplasm. The enzyme catalyses cytidine(1402) in 16S rRNA + S-adenosyl-L-methionine = N(4)-methylcytidine(1402) in 16S rRNA + S-adenosyl-L-homocysteine + H(+). Specifically methylates the N4 position of cytidine in position 1402 (C1402) of 16S rRNA. The chain is Ribosomal RNA small subunit methyltransferase H from Pseudomonas fluorescens (strain Pf0-1).